The chain runs to 346 residues: 2-oxoglutarate synthase subunit KorA (346 aa).

In terms of assembly, heterotetramer of the KorA, KorB, KorC and KorD subunits.

It carries out the reaction 2 oxidized [2Fe-2S]-[ferredoxin] + 2-oxoglutarate + CoA = succinyl-CoA + 2 reduced [2Fe-2S]-[ferredoxin] + CO2 + H(+). The sequence is that of 2-oxoglutarate synthase subunit KorA (korA) from Archaeoglobus fulgidus (strain ATCC 49558 / DSM 4304 / JCM 9628 / NBRC 100126 / VC-16).